Reading from the N-terminus, the 436-residue chain is Magnesium transporter MRS2-4 (436 aa).

A disordered region spans residues 1–56 (MGKGPLSFRRLSSIRHRKKGSAVKDDSAQTSTPSSPPPPLPIHAGGSAVGATGKAK). Positions 12–21 (SSIRHRKKGS) are enriched in basic residues. Residues 44-53 (AGGSAVGATG) are compositionally biased toward low complexity. The next 2 membrane-spanning stretches (helical) occupy residues 372–392 (LTLTIASFAIAAETLLASLFG) and 405–425 (VFGYFVWSVTALCIVLFMVTL). A Required for magnesium transport activity motif is present at residues 392-394 (GMN).

The protein belongs to the CorA metal ion transporter (MIT) (TC 1.A.35.5) family. Expressed in the whole plant except roots.

It localises to the membrane. In terms of biological role, magnesium transporter that may mediate the influx of magnesium. This is Magnesium transporter MRS2-4 (MRS2-4) from Arabidopsis thaliana (Mouse-ear cress).